Reading from the N-terminus, the 179-residue chain is Bifunctional protein PyrR (179 aa).

The PRPP-binding motif lies at 97-109 (VILIDDVLFTGRT).

The protein belongs to the purine/pyrimidine phosphoribosyltransferase family. PyrR subfamily.

It catalyses the reaction UMP + diphosphate = 5-phospho-alpha-D-ribose 1-diphosphate + uracil. Functionally, regulates the transcription of the pyrimidine nucleotide (pyr) operon in response to exogenous pyrimidines. In terms of biological role, also displays a weak uracil phosphoribosyltransferase activity which is not physiologically significant. This is Bifunctional protein PyrR from Actinobacillus pleuropneumoniae serotype 5b (strain L20).